A 338-amino-acid polypeptide reads, in one-letter code: Fructose-1,6-bisphosphatase class 1 (338 aa).

Mg(2+) contacts are provided by glutamate 94, aspartate 116, leucine 118, and aspartate 119. Residues 119-122 (DGSS), asparagine 210, and lysine 276 each bind substrate. Glutamate 282 is a binding site for Mg(2+).

This sequence belongs to the FBPase class 1 family. Homotetramer. Mg(2+) serves as cofactor.

The protein resides in the cytoplasm. The catalysed reaction is beta-D-fructose 1,6-bisphosphate + H2O = beta-D-fructose 6-phosphate + phosphate. Its pathway is carbohydrate biosynthesis; gluconeogenesis. This Burkholderia mallei (strain NCTC 10247) protein is Fructose-1,6-bisphosphatase class 1.